A 236-amino-acid polypeptide reads, in one-letter code: Transcriptional regulatory protein RprY (236 aa).

Residues 9–123 form the Response regulatory domain; the sequence is RILLCEDDEN…ELTFRIEAIL (115 aa). A 4-aspartylphosphate modification is found at Asp58. The segment at residues 134–231 is a DNA-binding region (ompR/PhoB-type); sequence SNVYKIGKFT…IHGKGYKLIT (98 aa).

Post-translationally, phosphorylated by RprX.

The protein resides in the cytoplasm. In terms of biological role, member of the two-component regulatory system RprX/RprY. The chain is Transcriptional regulatory protein RprY (rprY) from Bacteroides fragilis (strain YCH46).